The following is a 393-amino-acid chain: Flavohemoprotein (393 aa).

The region spanning 1-139 (MLSAEHRAIV…LADLLIGLEE (139 aa)) is the Globin domain. Residue H85 participates in heme b binding. Residues Y95 and E138 each act as charge relay system in the active site. Positions 150-393 (GGWRGTRAFV…EFFGPASALD (244 aa)) are reductase. The 104-residue stretch at 153–256 (RGTRAFVVAR…LTPSGDFTLE (104 aa)) folds into the FAD-binding FR-type domain. Residues Y191 and 205-208 (RNYS) each bind FAD. 268 to 273 (GVGITP) is an NADP(+) binding site. 385–388 (FFGP) is a binding site for FAD.

Belongs to the globin family. Two-domain flavohemoproteins subfamily. It in the C-terminal section; belongs to the flavoprotein pyridine nucleotide cytochrome reductase family. Requires heme b as cofactor. FAD serves as cofactor.

It carries out the reaction 2 nitric oxide + NADPH + 2 O2 = 2 nitrate + NADP(+) + H(+). The catalysed reaction is 2 nitric oxide + NADH + 2 O2 = 2 nitrate + NAD(+) + H(+). Is involved in NO detoxification in an aerobic process, termed nitric oxide dioxygenase (NOD) reaction that utilizes O(2) and NAD(P)H to convert NO to nitrate, which protects the bacterium from various noxious nitrogen compounds. Therefore, plays a central role in the inducible response to nitrosative stress. In Burkholderia sp. (strain TH2), this protein is Flavohemoprotein.